Reading from the N-terminus, the 194-residue chain is Thymidine kinase (194 aa).

ATP contacts are provided by residues 15-22 and 89-92; these read GPMFSGKS and DEAH. E90 serves as the catalytic Proton acceptor. Zn(2+) contacts are provided by C146, C149, C178, and C181.

Belongs to the thymidine kinase family. As to quaternary structure, homotetramer.

Its subcellular location is the cytoplasm. It carries out the reaction thymidine + ATP = dTMP + ADP + H(+). In Metamycoplasma arthritidis (strain 158L3-1) (Mycoplasma arthritidis), this protein is Thymidine kinase.